The sequence spans 259 residues: Type III pantothenate kinase (259 aa).

6-13 (DVGNTNCT) contributes to the ATP binding site. Residue 107 to 110 (GSDR) coordinates substrate. Aspartate 109 acts as the Proton acceptor in catalysis. Aspartate 129 serves as a coordination point for K(+). Residue threonine 132 coordinates ATP. A substrate-binding site is contributed by threonine 184.

Belongs to the type III pantothenate kinase family. Homodimer. NH4(+) serves as cofactor. Requires K(+) as cofactor.

It is found in the cytoplasm. The enzyme catalyses (R)-pantothenate + ATP = (R)-4'-phosphopantothenate + ADP + H(+). It functions in the pathway cofactor biosynthesis; coenzyme A biosynthesis; CoA from (R)-pantothenate: step 1/5. In terms of biological role, catalyzes the phosphorylation of pantothenate (Pan), the first step in CoA biosynthesis. The protein is Type III pantothenate kinase of Listeria monocytogenes serotype 4b (strain CLIP80459).